The following is a 293-amino-acid chain: Phosphatidylserine decarboxylase proenzyme (293 aa).

Catalysis depends on charge relay system; for autoendoproteolytic cleavage activity residues D88, H144, and S247. S247 functions as the Schiff-base intermediate with substrate; via pyruvic acid; for decarboxylase activity in the catalytic mechanism. At S247 the chain carries Pyruvic acid (Ser); by autocatalysis.

The protein belongs to the phosphatidylserine decarboxylase family. PSD-B subfamily. Prokaryotic type I sub-subfamily. As to quaternary structure, heterodimer of a large membrane-associated beta subunit and a small pyruvoyl-containing alpha subunit. Pyruvate serves as cofactor. In terms of processing, is synthesized initially as an inactive proenzyme. Formation of the active enzyme involves a self-maturation process in which the active site pyruvoyl group is generated from an internal serine residue via an autocatalytic post-translational modification. Two non-identical subunits are generated from the proenzyme in this reaction, and the pyruvate is formed at the N-terminus of the alpha chain, which is derived from the carboxyl end of the proenzyme. The autoendoproteolytic cleavage occurs by a canonical serine protease mechanism, in which the side chain hydroxyl group of the serine supplies its oxygen atom to form the C-terminus of the beta chain, while the remainder of the serine residue undergoes an oxidative deamination to produce ammonia and the pyruvoyl prosthetic group on the alpha chain. During this reaction, the Ser that is part of the protease active site of the proenzyme becomes the pyruvoyl prosthetic group, which constitutes an essential element of the active site of the mature decarboxylase.

It localises to the cell membrane. The enzyme catalyses a 1,2-diacyl-sn-glycero-3-phospho-L-serine + H(+) = a 1,2-diacyl-sn-glycero-3-phosphoethanolamine + CO2. Its pathway is phospholipid metabolism; phosphatidylethanolamine biosynthesis; phosphatidylethanolamine from CDP-diacylglycerol: step 2/2. Functionally, catalyzes the formation of phosphatidylethanolamine (PtdEtn) from phosphatidylserine (PtdSer). This is Phosphatidylserine decarboxylase proenzyme from Xylella fastidiosa (strain 9a5c).